Here is an 832-residue protein sequence, read N- to C-terminus: Protein P (832 aa).

The terminal protein domain (TP) stretch occupies residues 1 to 177; sequence MPLSCQHFRK…FCGSPYSWEQ (177 aa). Positions 178–335 are spacer; it reads ELQHGAEPFC…NCLSHIVNLL (158 aa). The interval 198 to 264 is disordered; it reads SIGPAVPSQH…HNTASSSSSC (67 aa). Residues 336-679 form a polymerase/reverse transcriptase domain (RT) region; the sequence is EDWGPCTEHG…YLTLYPVARQ (344 aa). The region spanning 346–589 is the Reverse transcriptase domain; it reads EHLIRIPRTP…YSLHFMGYVI (244 aa). Positions 418, 540, and 541 each coordinate Mg(2+).

The protein belongs to the hepadnaviridae P protein family.

It catalyses the reaction DNA(n) + a 2'-deoxyribonucleoside 5'-triphosphate = DNA(n+1) + diphosphate. It carries out the reaction Endonucleolytic cleavage to 5'-phosphomonoester.. Its activity is regulated as follows. Activated by host HSP70 and HSP40 in vitro to be able to bind the epsilon loop of the pgRNA. Because deletion of the RNase H region renders the protein partly chaperone-independent, the chaperones may be needed indirectly to relieve occlusion of the RNA-binding site by this domain. Inhibited by several reverse-transcriptase inhibitors: Lamivudine, Adefovir and Entecavir. Its function is as follows. Multifunctional enzyme that converts the viral RNA genome into dsDNA in viral cytoplasmic capsids. This enzyme displays a DNA polymerase activity that can copy either DNA or RNA templates, and a ribonuclease H (RNase H) activity that cleaves the RNA strand of RNA-DNA heteroduplexes in a partially processive 3'- to 5'-endonucleasic mode. Neo-synthesized pregenomic RNA (pgRNA) are encapsidated together with the P protein, and reverse-transcribed inside the nucleocapsid. Initiation of reverse-transcription occurs first by binding the epsilon loop on the pgRNA genome, and is initiated by protein priming, thereby the 5'-end of (-)DNA is covalently linked to P protein. Partial (+)DNA is synthesized from the (-)DNA template and generates the relaxed circular DNA (RC-DNA) genome. After budding and infection, the RC-DNA migrates in the nucleus, and is converted into a plasmid-like covalently closed circular DNA (cccDNA). The activity of P protein does not seem to be necessary for cccDNA generation, and is presumably released from (+)DNA by host nuclear DNA repair machinery. The polypeptide is Protein P (Pongo pygmaeus (Bornean orangutan)).